The sequence spans 440 residues: Platelet-activating factor acetylhydrolase (440 aa).

The signal sequence occupies residues 1-21; the sequence is MVPLKLQALFCLLCCLPWVHP. N-linked (GlcNAc...) asparagine glycosylation is found at Asn-59, Asn-75, and Asn-199. Ser-272 (nucleophile) is an active-site residue. Catalysis depends on charge relay system residues Asp-295 and His-350.

It belongs to the AB hydrolase superfamily. Lipase family. Post-translationally, N-glycosylated. In terms of tissue distribution, plasma.

The protein localises to the secreted. The protein resides in the extracellular space. It catalyses the reaction a 1-O-alkyl-2-acetyl-sn-glycero-3-phosphocholine + H2O = a 1-O-alkyl-sn-glycero-3-phosphocholine + acetate + H(+). The enzyme catalyses 1-O-decyl-2-acetyl-sn-glycero-3-phosphocholine + H2O = 1-O-decyl-sn-glycero-3-phosphocholine + acetate + H(+). The catalysed reaction is 1-O-dodecyl-2-acetyl-sn-glycero-3-phosphocholine + H2O = 1-O-dodecyl-sn-glycero-3-phosphocholine + acetate + H(+). It carries out the reaction 1-O-tetradecyl-2-acetyl-sn-glycero-3-phosphocholine + H2O = 1-O-tetradecyl-sn-glycero-3-phosphocholine + acetate + H(+). It catalyses the reaction 1-O-hexadecyl-2-acetyl-sn-glycero-3-phosphocholine + H2O = 1-O-hexadecyl-sn-glycero-3-phosphocholine + acetate + H(+). The enzyme catalyses 1-O-octadecyl-2-acetyl-sn-glycero-3-phosphocholine + H2O = 1-O-octadecyl-sn-glycero-3-phosphocholine + acetate + H(+). The catalysed reaction is 1-hexadecanoyl-2-acetyl-sn-glycero-3-phosphocholine + H2O = 1-hexadecanoyl-sn-glycero-3-phosphocholine + acetate + H(+). It carries out the reaction 1-hexadecanoyl-2-propionyl-sn-glycero-3-phosphocholine + H2O = propanoate + 1-hexadecanoyl-sn-glycero-3-phosphocholine + H(+). It catalyses the reaction 1-hexadecanoyl-2-butanoyl-sn-glycero-3-phosphocholine + H2O = butanoate + 1-hexadecanoyl-sn-glycero-3-phosphocholine + H(+). The enzyme catalyses 1-hexadecanoyl-2-pentanoyl-sn-glycero-3-phosphocholine + H2O = pentanoate + 1-hexadecanoyl-sn-glycero-3-phosphocholine + H(+). The catalysed reaction is 1-hexadecanoyl-2-glutaroyl-sn-glycero-3-phosphocholine + H2O = glutarate + 1-hexadecanoyl-sn-glycero-3-phosphocholine + H(+). It carries out the reaction 1-hexadecanoyl-2-(5-oxopentanoyl)-sn-glycero-3-phosphocholine + H2O = 5-oxopentanoate + 1-hexadecanoyl-sn-glycero-3-phosphocholine + H(+). It catalyses the reaction 1-hexadecanoyl-2-(9-oxononanoyl)-sn-glycero-3-phosphocholine + H2O = 9-oxononanoate + 1-hexadecanoyl-sn-glycero-3-phosphocholine + H(+). The enzyme catalyses 1-hexadecanoyl-2-[9-hydroperoxy-(10E-octadecenoyl)]-sn-glycero-3-phosphocholine + H2O = 9-hydroperoxy-10E-octadecenoate + 1-hexadecanoyl-sn-glycero-3-phosphocholine + H(+). The catalysed reaction is 1-hexadecanoyl-2-(10-hydroperoxy-8E-octadecenoyl)-sn-glycero-3-phosphocholine + H2O = 10-hydroperoxy-(8E)-octadecenoate + 1-hexadecanoyl-sn-glycero-3-phosphocholine + H(+). In terms of biological role, lipoprotein-associated calcium-independent phospholipase A2 involved in phospholipid catabolism during inflammatory and oxidative stress response. At the lipid-aqueous interface, hydrolyzes the ester bond of fatty acyl group attached at sn-2 position of phospholipids (phospholipase A2 activity). Specifically targets phospholipids with a short-chain fatty acyl group at sn-2 position. Can hydrolyze phospholipids with long fatty acyl chains, only if they carry oxidized functional groups. Hydrolyzes and inactivates platelet-activating factor (PAF, 1-O-alkyl-2-acetyl-sn-glycero-3-phosphocholine), a potent pro-inflammatory signaling lipid that acts through PTAFR on various innate immune cells. Hydrolyzes oxidatively truncated phospholipids carrying an aldehyde group at omega position, preventing their accumulation in lipoprotein particles and uncontrolled pro-inflammatory effects. As part of high-density lipoprotein (HDL) particles, can hydrolyze phospholipids having long-chain fatty acyl hydroperoxides at sn-2 position and protect against potential accumulation of these oxylipins in the vascular wall. Catalyzes the release from membrane phospholipids of F2-isoprostanes, lipid biomarkers of cellular oxidative damage. This chain is Platelet-activating factor acetylhydrolase (Pla2g7), found in Mus musculus (Mouse).